A 374-amino-acid chain; its full sequence is Protein RecA (374 aa).

66-73 (GPESSGKT) contributes to the ATP binding site. The tract at residues 327–374 (LGVGVHPEESATEPGADAASAAPADAAPAVPAPTTAKATKSKAAAAKS) is disordered. Residues 338-374 (TEPGADAASAAPADAAPAVPAPTTAKATKSKAAAAKS) show a composition bias toward low complexity.

This sequence belongs to the RecA family.

Its subcellular location is the cytoplasm. Can catalyze the hydrolysis of ATP in the presence of single-stranded DNA, the ATP-dependent uptake of single-stranded DNA by duplex DNA, and the ATP-dependent hybridization of homologous single-stranded DNAs. It interacts with LexA causing its activation and leading to its autocatalytic cleavage. In Streptomyces lividans, this protein is Protein RecA.